A 673-amino-acid polypeptide reads, in one-letter code: DNA ligase (673 aa).

NAD(+) is bound by residues 34–38 (DAEYD), 83–84 (SL), and glutamate 116. Lysine 118 (N6-AMP-lysine intermediate) is an active-site residue. NAD(+) contacts are provided by arginine 139, glutamate 176, lysine 293, and lysine 317. Residues cysteine 411, cysteine 414, cysteine 429, and cysteine 435 each contribute to the Zn(2+) site. Residues 595-673 (NQQNPFFGKT…EDEFLKWVNS (79 aa)) enclose the BRCT domain.

Belongs to the NAD-dependent DNA ligase family. LigA subfamily. It depends on Mg(2+) as a cofactor. Mn(2+) serves as cofactor.

It catalyses the reaction NAD(+) + (deoxyribonucleotide)n-3'-hydroxyl + 5'-phospho-(deoxyribonucleotide)m = (deoxyribonucleotide)n+m + AMP + beta-nicotinamide D-nucleotide.. In terms of biological role, DNA ligase that catalyzes the formation of phosphodiester linkages between 5'-phosphoryl and 3'-hydroxyl groups in double-stranded DNA using NAD as a coenzyme and as the energy source for the reaction. It is essential for DNA replication and repair of damaged DNA. This Legionella pneumophila (strain Paris) protein is DNA ligase.